Consider the following 503-residue polypeptide: Serine/threonine-protein kinase chk-1 (503 aa).

Residues 24–286 enclose the Protein kinase domain; sequence YRVVQTLGEG…IEQIQADPWY (263 aa). Residues 30–38 and Lys54 each bind ATP; that span reads LGEGAFGEV. Catalysis depends on Asp150, which acts as the Proton acceptor. A disordered region spans residues 320-346; the sequence is SAKRRHLETPNEKSTLAERQNASFSQP. Residues 331–346 show a composition bias toward polar residues; it reads EKSTLAERQNASFSQP. Ser344 is subject to Phosphoserine.

This sequence belongs to the protein kinase superfamily. CAMK Ser/Thr protein kinase family. NIM1 subfamily. As to expression, expressed in the germline.

It localises to the cytoplasm. It is found in the nucleus. The protein localises to the perinuclear region. It catalyses the reaction L-seryl-[protein] + ATP = O-phospho-L-seryl-[protein] + ADP + H(+). The catalysed reaction is L-threonyl-[protein] + ATP = O-phospho-L-threonyl-[protein] + ADP + H(+). In terms of biological role, serine/threonine-protein kinase which is required for checkpoint-mediated cell cycle arrest and activation of DNA repair in response to the presence of DNA damage or unreplicated DNA. May also negatively regulate cell cycle progression during unperturbed cell cycles. Required for checkpoint mediated cell cycle arrest in response to DNA damage in germline cells. Delays cell-cycle reentry of the Z2 and Z3 primordial germ cells in response to transcription-induced DNA damage as they emerge from cell cycle arrest in L1 larvae. Essential for embryogenesis. The chain is Serine/threonine-protein kinase chk-1 from Caenorhabditis elegans.